We begin with the raw amino-acid sequence, 231 residues long: Phosphoglycolate phosphatase (231 aa).

The Nucleophile role is filled by Asp9. Mg(2+)-binding residues include Asp9 and Asp11. Lys154 lines the substrate pocket. 2 residues coordinate Mg(2+): Asp177 and Asp181.

The protein belongs to the archaeal SPP-like hydrolase family. Mg(2+) serves as cofactor.

It carries out the reaction 2-phosphoglycolate + H2O = glycolate + phosphate. Catalyzes the dephosphorylation of 2-phosphoglycolate. In Pyrococcus furiosus (strain ATCC 43587 / DSM 3638 / JCM 8422 / Vc1), this protein is Phosphoglycolate phosphatase.